A 1323-amino-acid chain; its full sequence is Sister chromatid cohesion protein PDS5 homolog A-B (1323 aa).

One copy of the HEAT repeat lies at phenylalanine 385–tyrosine 421. The disordered stretch occupies residues proline 1138–arginine 1323. The span at serine 1153 to serine 1165 shows a compositional bias: low complexity. Polar residues-rich tracts occupy residues aspartate 1166–glutamate 1176 and leucine 1210–threonine 1220. Over residues asparagine 1235–aspartate 1246 the composition is skewed to basic and acidic residues.

As to quaternary structure, interacts with the cohesin complex. Binds chromatin in a cohesin-dependent manner.

It localises to the nucleus. Its function is as follows. May regulate sister chromatid cohesion during mitosis and couple it to DNA replication. This Xenopus laevis (African clawed frog) protein is Sister chromatid cohesion protein PDS5 homolog A-B (pds5a-b).